Consider the following 417-residue polypeptide: Carboxypeptidase B (417 aa).

The N-terminal stretch at 1 to 15 is a signal peptide; sequence MLALLVLVTVALASA. A propeptide spans 16–110 (activation peptide); it reads HHGGEHFEGE…VEAQFDSRVR (95 aa). A Peptidase M14 domain is found at 118–412; it reads KYNKWETIEA…LAIKYVASYV (295 aa). A disulfide bond links Cys173 and Cys186. Zn(2+)-binding residues include His176 and Glu179. Substrate is bound by residues 176 to 179, Arg234, and 251 to 252; these read HARE and NR. 2 disulfides stabilise this stretch: Cys245-Cys268 and Cys259-Cys273. His304 contacts Zn(2+). Residues 305–306 and Tyr356 each bind substrate; that span reads SY. Catalysis depends on Glu378, which acts as the Proton donor/acceptor.

It belongs to the peptidase M14 family. It depends on Zn(2+) as a cofactor. As to expression, pancreas.

Its subcellular location is the secreted. It localises to the zymogen granule lumen. The catalysed reaction is Preferential release of a C-terminal lysine or arginine amino acid.. The protein is Carboxypeptidase B (CPB1) of Homo sapiens (Human).